The following is a 185-amino-acid chain: Ribosome maturation factor RimM (185 aa).

The 80-residue stretch at 105 to 184 folds into the PRC barrel domain; sequence KDEYYWKDII…IVVVDWEIYK (80 aa).

This sequence belongs to the RimM family. In terms of assembly, binds ribosomal protein uS19.

The protein resides in the cytoplasm. An accessory protein needed during the final step in the assembly of 30S ribosomal subunit, possibly for assembly of the head region. Essential for efficient processing of 16S rRNA. May be needed both before and after RbfA during the maturation of 16S rRNA. It has affinity for free ribosomal 30S subunits but not for 70S ribosomes. This is Ribosome maturation factor RimM from Blochmanniella floridana.